The following is a 207-amino-acid chain: Elongation factor 1-beta (207 aa).

A2 carries the N-acetylalanine modification. The tract at residues 70–96 (FPGIPTSASKEEDDDVDLFGSDEEDEE) is disordered. Residues 80–96 (EEDDDVDLFGSDEEDEE) are compositionally biased toward acidic residues. S90 carries the phosphoserine; by CK2 modification.

It belongs to the EF-1-beta/EF-1-delta family. In terms of assembly, EF-1 is composed of 4 subunits: alpha, beta, delta, and gamma. In terms of processing, phosphorylation affects the GDP/GTP exchange rate.

Functionally, EF-1-beta and EF-1-delta stimulate the exchange of GDP bound to EF-1-alpha to GTP. The sequence is that of Elongation factor 1-beta from Artemia salina (Brine shrimp).